The sequence spans 158 residues: Glycine-rich RNA-binding protein 2, mitochondrial (158 aa).

Residues 1–34 (MAFCNKLGGLLRQNISSNGNVPVTSMLGSLRLMS) constitute a mitochondrion transit peptide. Residues 35–113 (TKLFIGGLSW…RHIRVNPAND (79 aa)) form the RRM domain. Ser43 is subject to Phosphoserine. Positions 122–157 (GGGGGYSGGGGGYGGGGGGYGGGGGGYGGGGDGGGG) are glycine-rich (GR) required for cell-to-cell movement.

Belongs to the GR-RBP family. In terms of assembly, binds to small phloem-mobile single-stranded RNAs (ss-sRNA, e.g. small interfering RNA (siRNA) and microRNA (miRNA)) in the phloeme exudate, including viral-derived sRNA (vsiRNA). Interacts with ORRM2, RBG3/ORRM3 and RBG5/ORRM4.

The protein localises to the mitochondrion. The protein resides in the secreted. In terms of biological role, promotes the cis-splicing and editing of several mitochondrial RNAs (including NAD5 transcripts). Plays a role in RNA transcription or processing during stress. Binds RNAs and DNAs sequence with a preference to single-stranded nucleic acids. Displays strong affinity to poly(U) sequence. Exerts cold and freezing tolerance, probably by exhibiting an RNA chaperone activity during the cold and freezing adaptation process. Mediates cell-to-cell trafficking of RNA interference (RNAi) signals (small RNAs (sRNA), e.g. small interfering RNA (siRNA) and microRNA (miRNA)) which regulate growth and development, as well as responses to environmental inputs, including pathogen attack; can compromise zucchini yellow mosaic virus (ZYMV) and tobacco rattle virus (TRV) infections at the early stage. The protein is Glycine-rich RNA-binding protein 2, mitochondrial of Arabidopsis thaliana (Mouse-ear cress).